Reading from the N-terminus, the 273-residue chain is Dermonecrotic toxin LhSicTox-alphaIA2biii (273 aa).

H5 is a catalytic residue. Positions 25 and 27 each coordinate Mg(2+). H41 functions as the Nucleophile in the catalytic mechanism. 2 disulfide bridges follow: C45-C51 and C47-C190. D85 provides a ligand contact to Mg(2+).

Belongs to the arthropod phospholipase D family. Class II subfamily. Mg(2+) is required as a cofactor. Expressed by the venom gland.

It is found in the secreted. It carries out the reaction an N-(acyl)-sphingosylphosphocholine = an N-(acyl)-sphingosyl-1,3-cyclic phosphate + choline. It catalyses the reaction an N-(acyl)-sphingosylphosphoethanolamine = an N-(acyl)-sphingosyl-1,3-cyclic phosphate + ethanolamine. The catalysed reaction is a 1-acyl-sn-glycero-3-phosphocholine = a 1-acyl-sn-glycero-2,3-cyclic phosphate + choline. The enzyme catalyses a 1-acyl-sn-glycero-3-phosphoethanolamine = a 1-acyl-sn-glycero-2,3-cyclic phosphate + ethanolamine. Its function is as follows. Dermonecrotic toxins cleave the phosphodiester linkage between the phosphate and headgroup of certain phospholipids (sphingolipid and lysolipid substrates), forming an alcohol (often choline) and a cyclic phosphate. This toxin acts on sphingomyelin (SM). It may also act on ceramide phosphoethanolamine (CPE), lysophosphatidylcholine (LPC) and lysophosphatidylethanolamine (LPE), but not on lysophosphatidylserine (LPS), and lysophosphatidylglycerol (LPG). It acts by transphosphatidylation, releasing exclusively cyclic phosphate products as second products. Induces dermonecrosis, hemolysis, increased vascular permeability, edema, inflammatory response, and platelet aggregation. The polypeptide is Dermonecrotic toxin LhSicTox-alphaIA2biii (Loxosceles hirsuta (Recluse spider)).